A 436-amino-acid polypeptide reads, in one-letter code: Probable protein phosphatase 2C 15 (436 aa).

One can recognise a PPM-type phosphatase domain in the interval 30-302 (KAAKMEKPIV…DDTTCIVVDI (273 aa)). Residues Asp78, Gly79, Asp254, and Asp293 each contribute to the Mn(2+) site.

It belongs to the PP2C family. The cofactor is Mg(2+). Requires Mn(2+) as cofactor.

The catalysed reaction is O-phospho-L-seryl-[protein] + H2O = L-seryl-[protein] + phosphate. The enzyme catalyses O-phospho-L-threonyl-[protein] + H2O = L-threonyl-[protein] + phosphate. In Arabidopsis thaliana (Mouse-ear cress), this protein is Probable protein phosphatase 2C 15.